Here is a 211-residue protein sequence, read N- to C-terminus: Glial cell line-derived neurotrophic factor (211 aa).

The signal sequence occupies residues 1 to 19; sequence MKLWDVVAVCLVLLHTASA. Positions 20–75 are excised as a propeptide; the sequence is FPLPAGKRLLEAPAEDHSLGHRRVPFALTSDSNMPEDYPDQFDDVMDFIQATIKRL. The tract at residues 76 to 113 is disordered; sequence KRSPDKQAAALPRRERNRQAAAASPENSRGKGRRGQRG. 3 disulfide bridges follow: cysteine 118–cysteine 179, cysteine 145–cysteine 208, and cysteine 149–cysteine 210. Asparagine 126 and asparagine 162 each carry an N-linked (GlcNAc...) asparagine glycan.

The protein belongs to the TGF-beta family. GDNF subfamily. As to quaternary structure, homodimer; disulfide-linked. Interacts with GFRA1 coreceptor and RET: forms a 2:2:2 ternary complex composed of GDNF ligand, GFRA1 and RET receptor. Interacts (via propeptide) with SORL1 (via N-terminal ectodomain); this interaction affects GDNF-regulated, but not constitutive secretion. Also interacts with SORL1 in complex with GFRA1; this interaction leads to GDNF endocytosis and lysosomal degradation. In terms of tissue distribution, expressed in both the central nervous system (CNS) and in non-CNS tissues, including the kidney, lung, bone, heart, liver, spleen, sciatic nerve and blood. Expressed in brain (at protein level). Localizes at the proximal ligature of the hypoglossal nerve.

It localises to the secreted. Neurotrophic factor that enhances survival and morphological differentiation of dopaminergic neurons and increases their high-affinity dopamine uptake. Acts by binding to its coreceptor, GFRA1, leading to autophosphorylation and activation of the RET receptor. May also modulate local neuronal effects in distal regions of the motor neuron. Involved in the development of the neural crest. The sequence is that of Glial cell line-derived neurotrophic factor (Gdnf) from Rattus norvegicus (Rat).